We begin with the raw amino-acid sequence, 89 residues long: Small ribosomal subunit protein uS15 (89 aa).

Residues 1 to 20 (MSITQERKSALIAEHARGKT) show a composition bias toward basic and acidic residues. Residues 1–24 (MSITQERKSALIAEHARGKTDTGS) form a disordered region.

Belongs to the universal ribosomal protein uS15 family. In terms of assembly, part of the 30S ribosomal subunit. Forms a bridge to the 50S subunit in the 70S ribosome, contacting the 23S rRNA.

Functionally, one of the primary rRNA binding proteins, it binds directly to 16S rRNA where it helps nucleate assembly of the platform of the 30S subunit by binding and bridging several RNA helices of the 16S rRNA. Forms an intersubunit bridge (bridge B4) with the 23S rRNA of the 50S subunit in the ribosome. This Maricaulis maris (strain MCS10) (Caulobacter maris) protein is Small ribosomal subunit protein uS15.